Here is a 175-residue protein sequence, read N- to C-terminus: MASPRHILLINGPNLNLLGTREPQIYGSTTLHDIEQAAQTQASSLGLRLSTFQSNHEGAIIDRIHQAAGFSPSLSPSGAAAATTTEAGAGPGTGVDKLSAIIINPGAYTHTSVGIRDALLGTGIPFVEVHVSNVHAREAFRHHSYLSDKAAAVICGLGPFGYSAALEFAGRHMKL.

Tyr-26 serves as the catalytic Proton acceptor. Asn-104, His-110, and Asp-117 together coordinate substrate. His-130 functions as the Proton donor in the catalytic mechanism. Substrate-binding positions include 131–132 (VS) and Arg-141.

It belongs to the type-II 3-dehydroquinase family. Homododecamer. Adopts a ring-like structure, composed of an arrangement of two hexameric rings stacked on top of one another.

The catalysed reaction is 3-dehydroquinate = 3-dehydroshikimate + H2O. The protein operates within aromatic compound metabolism; 3,4-dihydroxybenzoate biosynthesis; 3,4-dihydroxybenzoate from 3-dehydroquinate: step 1/2. Functionally, is involved in the catabolism of quinate. Allows the utilization of quinate as carbon source via the beta-ketoadipate pathway. The polypeptide is Catabolic 3-dehydroquinase (Sordaria macrospora (strain ATCC MYA-333 / DSM 997 / K(L3346) / K-hell)).